We begin with the raw amino-acid sequence, 859 residues long: DNA mismatch repair protein MutS (859 aa).

615–622 (GPNMGGKS) provides a ligand contact to ATP.

The protein belongs to the DNA mismatch repair MutS family.

This protein is involved in the repair of mismatches in DNA. It is possible that it carries out the mismatch recognition step. This protein has a weak ATPase activity. This is DNA mismatch repair protein MutS from Chromohalobacter salexigens (strain ATCC BAA-138 / DSM 3043 / CIP 106854 / NCIMB 13768 / 1H11).